Consider the following 231-residue polypeptide: Endonuclease NucS (231 aa).

This sequence belongs to the NucS endonuclease family.

It is found in the cytoplasm. In terms of biological role, cleaves both 3' and 5' ssDNA extremities of branched DNA structures. The protein is Endonuclease NucS of Kocuria rhizophila (strain ATCC 9341 / DSM 348 / NBRC 103217 / DC2201).